Consider the following 131-residue polypeptide: Sec-independent protein translocase protein TatB (131 aa).

Residues 1–21 traverse the membrane as a helical segment; the sequence is MFDISFAELVVVGIVALIVIG. Polar residues-rich tracts occupy residues 71–93 and 111–131; these read NSFE…TQSA and PVNT…QPNS. Positions 71 to 131 are disordered; it reads NSFENSVRSE…APAEPRQPNS (61 aa).

It belongs to the TatB family. In terms of assembly, the Tat system comprises two distinct complexes: a TatABC complex, containing multiple copies of TatA, TatB and TatC subunits, and a separate TatA complex, containing only TatA subunits. Substrates initially bind to the TatABC complex, which probably triggers association of the separate TatA complex to form the active translocon.

The protein resides in the cell inner membrane. Functionally, part of the twin-arginine translocation (Tat) system that transports large folded proteins containing a characteristic twin-arginine motif in their signal peptide across membranes. Together with TatC, TatB is part of a receptor directly interacting with Tat signal peptides. TatB may form an oligomeric binding site that transiently accommodates folded Tat precursor proteins before their translocation. This is Sec-independent protein translocase protein TatB from Nitrosomonas europaea (strain ATCC 19718 / CIP 103999 / KCTC 2705 / NBRC 14298).